The following is a 185-amino-acid chain: ATP synthase subunit delta (185 aa).

The protein belongs to the ATPase delta chain family. In terms of assembly, F-type ATPases have 2 components, F(1) - the catalytic core - and F(0) - the membrane proton channel. F(1) has five subunits: alpha(3), beta(3), gamma(1), delta(1), epsilon(1). F(0) has three main subunits: a(1), b(2) and c(10-14). The alpha and beta chains form an alternating ring which encloses part of the gamma chain. F(1) is attached to F(0) by a central stalk formed by the gamma and epsilon chains, while a peripheral stalk is formed by the delta and b chains.

It localises to the cell inner membrane. Functionally, f(1)F(0) ATP synthase produces ATP from ADP in the presence of a proton or sodium gradient. F-type ATPases consist of two structural domains, F(1) containing the extramembraneous catalytic core and F(0) containing the membrane proton channel, linked together by a central stalk and a peripheral stalk. During catalysis, ATP synthesis in the catalytic domain of F(1) is coupled via a rotary mechanism of the central stalk subunits to proton translocation. Its function is as follows. This protein is part of the stalk that links CF(0) to CF(1). It either transmits conformational changes from CF(0) to CF(1) or is implicated in proton conduction. The protein is ATP synthase subunit delta of Ehrlichia chaffeensis (strain ATCC CRL-10679 / Arkansas).